Consider the following 115-residue polypeptide: NADH-ubiquinone oxidoreductase chain 3 (115 aa).

The next 3 membrane-spanning stretches (helical) occupy residues Met-4–Leu-24, Phe-55–Leu-75, and Met-86–Trp-106.

It belongs to the complex I subunit 3 family. In terms of assembly, core subunit of respiratory chain NADH dehydrogenase (Complex I) which is composed of 45 different subunits. Interacts with TMEM186. Interacts with TMEM242.

The protein localises to the mitochondrion inner membrane. It catalyses the reaction a ubiquinone + NADH + 5 H(+)(in) = a ubiquinol + NAD(+) + 4 H(+)(out). In terms of biological role, core subunit of the mitochondrial membrane respiratory chain NADH dehydrogenase (Complex I) which catalyzes electron transfer from NADH through the respiratory chain, using ubiquinone as an electron acceptor. Essential for the catalytic activity of complex I. The polypeptide is NADH-ubiquinone oxidoreductase chain 3 (Microtus pennsylvanicus (Meadow vole)).